Consider the following 312-residue polypeptide: Atrochrysone carboxyl ACP thioesterase AacuM (312 aa).

4 residues coordinate Zn(2+): H103, H105, D107, and H108. D107 serves as the catalytic Proton donor/acceptor.

The protein belongs to the metallo-beta-lactamase superfamily. The cofactor is Zn(2+).

It catalyses the reaction atrochrysone carboxyl-[ACP] + H2O = atrochrysone carboxylate + holo-[ACP] + H(+). It participates in secondary metabolite biosynthesis. Its function is as follows. Atrochrysone carboxyl ACP thioesterase; part of the gene cluster that mediates the biosynthesis of the tetrahydroxanthone dimer secalonic acid D. The pathway begins with the synthesis of atrochrysone thioester by the polyketide synthase AacuL. The atrochrysone carboxyl ACP thioesterase AacuM then breaks the thioester bond and releases the atrochrysone carboxylic acid from AacuL. Atrochrysone carboxylic acid is decarboxylated by the decarboxylase AacuI, and oxidized by the anthrone oxygenase AacuG to yield emodin. Emodin is then reduced to emodin hydroquinone by a yet unidentified oxidoreductase. A-ring reduction by the short chain dehydrogenase AacuN, dehydration by the scytalone dehydratase-like protein AacuK and probable spontaneous re-oxidation, results in overall deoxygenation to chrysophanol. Baeyer-Villiger oxidation by the Baeyer-Villiger monooxygenase (BVMO) AacuH then yields monodictyphenone. Monodictyphenone is transformed into compounds with the tetrahydroxanthone skeleton via methylesterification by the methyltransferase AacuQ, followed by the action of the flavin-dependent monooxygenase AacuC, the isomerase AacuP, and the short chain dehydrogenase/reductase AacuF or AacuD. AacuF and AacuD should accept the same compound as a substrate but perform the ketoreduction with a different stereoselectivity, thus yielding blennolides B and A, respectively. In the final step of the biosynthesis, the cytochrome P450 monooxygenase AacuE accepts blennolide B and/or blennolide A to conduct the dimerization reaction to furnish the tetrahydroxanthone dimers, secalonic acids D, B, and F. This Aspergillus aculeatus (strain ATCC 16872 / CBS 172.66 / WB 5094) protein is Atrochrysone carboxyl ACP thioesterase AacuM.